The sequence spans 261 residues: Putative outer membrane protein CT_371 (261 aa).

An N-terminal signal peptide occupies residues 1 to 18; it reads MRLCFILFLLLSPLISEA.

The protein resides in the cell outer membrane. The polypeptide is Putative outer membrane protein CT_371 (Chlamydia trachomatis serovar D (strain ATCC VR-885 / DSM 19411 / UW-3/Cx)).